We begin with the raw amino-acid sequence, 446 residues long: Histidine--tRNA ligase (446 aa).

This sequence belongs to the class-II aminoacyl-tRNA synthetase family. In terms of assembly, homodimer.

Its subcellular location is the cytoplasm. The catalysed reaction is tRNA(His) + L-histidine + ATP = L-histidyl-tRNA(His) + AMP + diphosphate + H(+). This is Histidine--tRNA ligase from Burkholderia cenocepacia (strain ATCC BAA-245 / DSM 16553 / LMG 16656 / NCTC 13227 / J2315 / CF5610) (Burkholderia cepacia (strain J2315)).